A 625-amino-acid polypeptide reads, in one-letter code: UvrABC system protein C (625 aa).

The GIY-YIG domain maps to 13 to 92 (DKPGVYIMKD…IKKHRPKFNI (80 aa)). The 36-residue stretch at 204–239 (EDIIKKLEKDMKEAADNLEFERAARIRDKINSLKHI) folds into the UVR domain.

This sequence belongs to the UvrC family. Interacts with UvrB in an incision complex.

It is found in the cytoplasm. Functionally, the UvrABC repair system catalyzes the recognition and processing of DNA lesions. UvrC both incises the 5' and 3' sides of the lesion. The N-terminal half is responsible for the 3' incision and the C-terminal half is responsible for the 5' incision. The sequence is that of UvrABC system protein C from Acetivibrio thermocellus (strain ATCC 27405 / DSM 1237 / JCM 9322 / NBRC 103400 / NCIMB 10682 / NRRL B-4536 / VPI 7372) (Clostridium thermocellum).